The chain runs to 643 residues: Maternal embryonic leucine zipper kinase (643 aa).

Positions 11 to 263 (YELYETIGTG…MRNLLNHPWV (253 aa)) constitute a Protein kinase domain. Residues 17–25 (IGTGGFAKV) and K40 contribute to the ATP site. Residue T56 is modified to Phosphothreonine; by autocatalysis. D132 functions as the Proton acceptor in the catalytic mechanism. Y163 bears the Phosphotyrosine; by autocatalysis mark. T167 carries the phosphothreonine; by autocatalysis modification. Residues S171 and S253 each carry the phosphoserine; by autocatalysis modification. Positions 282–321 (LDEDCVTELSVHHRSSRQTMEDLISSWQYDHLTATYLLLL) are UBA-like. Positions 326 to 643 (RGKPARLQLL…VEDILSGCKM (318 aa)) are autoinhibitory region. Phosphoserine; by autocatalysis occurs at positions 336 and 343. S352 bears the Phosphoserine mark. Phosphoserine; by autocatalysis is present on residues S399 and S423. Position 486 is a phosphothreonine; by autocatalysis (T486). S490 is modified (phosphoserine). S497 carries the phosphoserine; by autocatalysis modification. T510 is subject to Phosphothreonine. Residue S521 is modified to Phosphoserine; by autocatalysis. Phosphothreonine; by autocatalysis is present on T531. The region spanning 594-643 (SDFGKVTMQFELEVCQLQRPDVVGIRRQRLKGDAWVYKRLVEDILSGCKM) is the KA1 domain.

The protein belongs to the protein kinase superfamily. CAMK Ser/Thr protein kinase family. SNF1 subfamily. As to quaternary structure, monomer. Interacts with ZNF622 and PPP1R8. In terms of processing, autophosphorylated: autophosphorylation of the T-loop at Thr-167 and Ser-171 is required for activation. Expressed in testis, ovary, thymus, spleen and T-cell. Expressed by neural progenitors: highly enriched in cultures containing multipotent progenitors.

The protein resides in the cell membrane. The enzyme catalyses L-tyrosyl-[protein] + ATP = O-phospho-L-tyrosyl-[protein] + ADP + H(+). It carries out the reaction L-seryl-[protein] + ATP = O-phospho-L-seryl-[protein] + ADP + H(+). The catalysed reaction is L-threonyl-[protein] + ATP = O-phospho-L-threonyl-[protein] + ADP + H(+). Activated by autophosphorylation of the T-loop at Thr-167 and Ser-171: in contrast to other members of the SNF1 subfamily, phosphorylation at Thr-167 is not mediated by STK11/LKB1 but via autophosphorylation instead. Inhibited by calcium-binding. Kinase activity is also regulated by reducing agents: dithiothreitol (DTT) or reduced glutathione are required for kinase activity in vitro; such dependence is however not due to the presence of disulfide bonds. Its function is as follows. Serine/threonine-protein kinase involved in various processes such as cell cycle regulation, self-renewal of stem cells, apoptosis and splicing regulation. Has a broad substrate specificity; phosphorylates BCL2L14, CDC25B, MAP3K5/ASK1 and ZNF622. Acts as an activator of apoptosis by phosphorylating and activating MAP3K5/ASK1. Acts as a regulator of cell cycle, notably by mediating phosphorylation of CDC25B, promoting localization of CDC25B to the centrosome and the spindle poles during mitosis. Plays a key role in cell proliferation. Required for proliferation of embryonic and postnatal multipotent neural progenitors. Phosphorylates and inhibits BCL2L14. Also involved in the inhibition of spliceosome assembly during mitosis by phosphorylating ZNF622, thereby contributing to its redirection to the nucleus. May also play a role in primitive hematopoiesis. The chain is Maternal embryonic leucine zipper kinase (Melk) from Mus musculus (Mouse).